The sequence spans 568 residues: Calcium-dependent protein kinase 5 (568 aa).

One can recognise a Protein kinase domain in the interval 125 to 379 (EIDRYKLGKG…VEQVLKHRWF (255 aa)). ATP contacts are provided by residues 131–139 (LGKGSYGNV) and K154. The active-site Proton acceptor is the D245. Positions 400–408 (KFKEFHKLC) match the J domain autoinhibitory motif motif. Positions 400 to 435 (KFKEFHKLCKIKKLAVTCIAYQLNEKDIGKLKKTFE) are j domain. The short motif at 409–418 (KIKKLAVTCI) is the J domain EF-hand interaction motif element. EF-hand domains are found at residues 425-460 (KDIGKLKKTFEAFDHNGDGVLTISEIFQCLKVNDNE), 462-495 (DRELYFLLKQLDTDGNGLIDYTEFLAACLDHSIF), 496-531 (QQDVICRNAFNVFDLDGDGVITKDELFKILSFSAVQ), and 534-568 (FSKEIIENLIKEVDSNNDGFIDYDEFYKMMTGVKE). Ca(2+)-binding residues include D438, N440, D442, E449, D473, D475, N477, E484, D509, D511, D513, E520, D547, N549, D551, and E558.

It belongs to the protein kinase superfamily. Ser/Thr protein kinase family. CDPK subfamily. The cofactor is Mg(2+). May be palmitoylated. Post-translationally, autophosphorylated in vitro.

Its subcellular location is the cytoplasm. The protein localises to the cytoplasmic vesicle. It is found in the secretory vesicle. The protein resides in the microneme membrane. It localises to the cell membrane. It carries out the reaction L-seryl-[protein] + ATP = O-phospho-L-seryl-[protein] + ADP + H(+). It catalyses the reaction L-threonyl-[protein] + ATP = O-phospho-L-threonyl-[protein] + ADP + H(+). With respect to regulation, activated by calcium. Upon calcium binding to the EF-hand domains, the C-terminus of the junction domain (J domain) undergoes a conformational change which results in the dissociation of the pseudo-substrate inhibitory motif from the catalytic domain. This, in turn, may facilitate the autophosphorylation of the activation loop at Thr-285, which leads to the kinase activation. Its function is as follows. Calcium-dependent protein kinase which acts as a sensor and effector of intracellular Ca(2+) levels probably in part downstream of cGMP-activated PKG kinase. Plays a central role in host erythrocytes and hepatocytes infection cycles. During the liver stage, involved in sporozoite motility and thus in sporozoite invasion of host hepatocytes, probably together with CDPK1 and CDPK4. Involved in merosome egress from host hepatocytes, probably together with CDPK4. Required for the release of hepatic merozoites from merosomes in the host blood stream. During the asexual blood stage, required for merozoite egress from host erythrocytes by triggering microneme secretion. Phosphorylates transporter NPT1 at late schizont stage. The polypeptide is Calcium-dependent protein kinase 5 (Plasmodium falciparum (isolate 3D7)).